A 415-amino-acid polypeptide reads, in one-letter code: Histidine--tRNA ligase (415 aa).

Belongs to the class-II aminoacyl-tRNA synthetase family. Homodimer.

The protein resides in the cytoplasm. It catalyses the reaction tRNA(His) + L-histidine + ATP = L-histidyl-tRNA(His) + AMP + diphosphate + H(+). The polypeptide is Histidine--tRNA ligase (Clostridium botulinum (strain Loch Maree / Type A3)).